Reading from the N-terminus, the 929-residue chain is Dual specificity protein phosphatase PHS1 (929 aa).

Disordered stretches follow at residues 1-27 (MAEPEKKRDQPFSQEKDEEKDLYLVHD) and 545-618 (PESP…SLSS). Basic and acidic residues-rich tracts occupy residues 552-580 (HGHEVNHYPSPSKDRVPSDNSSDHSESDM) and 591-606 (ENKEDGSSPKSRESWH). The region spanning 703-848 (KPSMIQENLF…LINLDKKCHG (146 aa)) is the Tyrosine-protein phosphatase domain. C792 serves as the catalytic Phosphocysteine intermediate. 792–798 (CFEGRSR) serves as a coordination point for substrate. Positions 903–911 (QKALEALKL) match the Nuclear export signal motif.

Interacts with MPK18. As to expression, expressed in roots, leaves and flowers.

The protein resides in the cytoplasm. It carries out the reaction O-phospho-L-seryl-[protein] + H2O = L-seryl-[protein] + phosphate. The enzyme catalyses O-phospho-L-threonyl-[protein] + H2O = L-threonyl-[protein] + phosphate. It catalyses the reaction O-phospho-L-tyrosyl-[protein] + H2O = L-tyrosyl-[protein] + phosphate. Probable dual specificity phosphatase that binds and dephosphorylates MPK18, modulating the organization and dynamics of cortical microtubules. Acts as a negative regulator of abscisic acid (ABA) signaling during seed germination and light-induced stomata aperture. The sequence is that of Dual specificity protein phosphatase PHS1 (PHS1) from Arabidopsis thaliana (Mouse-ear cress).